Consider the following 861-residue polypeptide: Replication factor C subunit 1 (861 aa).

The disordered stretch occupies residues 1–103 (MVNISDFFGK…SSKSSDSASN (103 aa)). Polar residues predominate over residues 16–28 (RSSTSRPTRQVGS). Phosphothreonine is present on Thr38. Phosphoserine is present on Ser40. Position 63 is a phosphothreonine (Thr63). The BRCT domain maps to 153–243 (GKPNCLLGLT…PAEGGDGEAA (91 aa)). Residues Thr299, Cys311, 353 to 361 (GPPGIGKTT), and Asn456 contribute to the ATP site. Positions 788 to 861 (STIGGGGVGT…GGSKKRKTKA (74 aa)) are disordered. The span at 803 to 823 (DFEDVVDADDNPVPADDEETQ) shows a compositional bias: acidic residues. 2 consecutive short sequence motifs (nuclear localization signal) follow at residues 830–834 (KKDKL) and 855–860 (KKRKTK). Over residues 836–861 (KQKAKPTKRKTATSKPGGSKKRKTKA) the composition is skewed to basic residues.

This sequence belongs to the activator 1 large subunit family. Replication factor C (RFC) is a heteropentamer of subunits RFC1, RFC2, RFC3, RFC4 and RFC5 and forms a complex with POL30/PCNA in the presence of ATP. Interacts with ECO1 and POL30/PCNA.

It localises to the nucleus. Component of the ATP-dependent clamp loader RFC complex for the POL30/PCNA homotrimer DNA clamp. During a clamp loading circle, the RFC:clamp complex binds to DNA and the recognition of the double-stranded/single-stranded junction stimulates ATP hydrolysis by RFC. The complex presumably provides bipartite ATP sites in which one subunit supplies a catalytic site for hydrolysis of ATP bound to the neighboring subunit. Dissociation of RFC from the clamp leaves the clamp encircling DNA. Replication factor C (RFC or activator 1) complex acts during elongation of primed DNA templates by DNA polymerase delta and epsilon. RFC has an essential but redundant activity in sister chromatid cohesion establishment. This Saccharomyces cerevisiae (strain ATCC 204508 / S288c) (Baker's yeast) protein is Replication factor C subunit 1 (RFC1).